A 221-amino-acid polypeptide reads, in one-letter code: uncharacterized protein (221 aa).

An N-terminal signal peptide occupies residues Met1 to Ser26.

This is an uncharacterized protein from Mycobacterium tuberculosis (strain ATCC 25618 / H37Rv).